The primary structure comprises 145 residues: Large ribosomal subunit protein uL13 (145 aa).

It belongs to the universal ribosomal protein uL13 family. Part of the 50S ribosomal subunit.

In terms of biological role, this protein is one of the early assembly proteins of the 50S ribosomal subunit, although it is not seen to bind rRNA by itself. It is important during the early stages of 50S assembly. In Bacillus thuringiensis (strain Al Hakam), this protein is Large ribosomal subunit protein uL13.